Reading from the N-terminus, the 148-residue chain is Deoxyuridine 5'-triphosphate nucleotidohydrolase (148 aa).

Residues 67-69 (RSG), N80, 84-86 (LID), and M94 contribute to the substrate site.

This sequence belongs to the dUTPase family. Mg(2+) is required as a cofactor.

The enzyme catalyses dUTP + H2O = dUMP + diphosphate + H(+). Its pathway is pyrimidine metabolism; dUMP biosynthesis; dUMP from dCTP (dUTP route): step 2/2. Functionally, this enzyme is involved in nucleotide metabolism: it produces dUMP, the immediate precursor of thymidine nucleotides and it decreases the intracellular concentration of dUTP so that uracil cannot be incorporated into DNA. The polypeptide is Deoxyuridine 5'-triphosphate nucleotidohydrolase (Burkholderia ambifaria (strain MC40-6)).